Here is a 156-residue protein sequence, read N- to C-terminus: Small ribosomal subunit protein uS7 (156 aa).

This sequence belongs to the universal ribosomal protein uS7 family. Part of the 30S ribosomal subunit. Contacts proteins S9 and S11.

Functionally, one of the primary rRNA binding proteins, it binds directly to 16S rRNA where it nucleates assembly of the head domain of the 30S subunit. Is located at the subunit interface close to the decoding center, probably blocks exit of the E-site tRNA. This is Small ribosomal subunit protein uS7 from Mycoplasmopsis agalactiae (strain NCTC 10123 / CIP 59.7 / PG2) (Mycoplasma agalactiae).